The sequence spans 188 residues: Peptidyl-prolyl cis-trans isomerase (188 aa).

The first 20 residues, 1-20 (MLKRVAIVLGGLLISAHALA), serve as a signal peptide directing secretion. The PPIase cyclophilin-type domain occupies 21–181 (NTMVEMKTNL…QPVKIISVQI (161 aa)).

The protein belongs to the cyclophilin-type PPIase family.

It localises to the periplasm. The catalysed reaction is [protein]-peptidylproline (omega=180) = [protein]-peptidylproline (omega=0). Functionally, PPIases accelerate the folding of proteins. It catalyzes the cis-trans isomerization of proline imidic peptide bonds in oligopeptides. This protein is not essential for growth. Presumably plays a role in signal transduction. The sequence is that of Peptidyl-prolyl cis-trans isomerase (rotA) from Acinetobacter baylyi (strain ATCC 33305 / BD413 / ADP1).